The sequence spans 272 residues: NH(3)-dependent NAD(+) synthetase (272 aa).

45–52 is a binding site for ATP; that stretch reads GISGGQDS. Residue D51 coordinates Mg(2+). R138 is a deamido-NAD(+) binding site. ATP is bound at residue T158. E163 is a Mg(2+) binding site. Deamido-NAD(+)-binding residues include K171 and D178. Positions 187 and 209 each coordinate ATP. Residue 258-259 coordinates deamido-NAD(+); the sequence is HK.

This sequence belongs to the NAD synthetase family. As to quaternary structure, homodimer.

The catalysed reaction is deamido-NAD(+) + NH4(+) + ATP = AMP + diphosphate + NAD(+) + H(+). The protein operates within cofactor biosynthesis; NAD(+) biosynthesis; NAD(+) from deamido-NAD(+) (ammonia route): step 1/1. Functionally, catalyzes the ATP-dependent amidation of deamido-NAD to form NAD. Uses ammonia as a nitrogen source. The sequence is that of NH(3)-dependent NAD(+) synthetase from Bacillus thuringiensis subsp. konkukian (strain 97-27).